We begin with the raw amino-acid sequence, 1305 residues long: ABC transporter FPSE_09185 (1305 aa).

Asn-28 is a glycosylation site (N-linked (GlcNAc...) asparagine). Helical transmembrane passes span 44 to 64 (FCVY…MPLM), 99 to 119 (LYIV…KFCF), 172 to 192 (RLGT…VAFT), 199 to 219 (IVSA…VPIY), 277 to 297 (IIGA…GLAF), and 312 to 332 (VGVV…FSYL). In terms of domain architecture, ABC transmembrane type-1 1 spans 48–348 (VVGALASIGV…ISQAMVAATE (301 aa)). Residues 372–663 (LIFKDVTFEY…ENGVYYSLVE (292 aa)) form the ABC transporter 1 domain. 407-414 (GPSGSGKS) is a binding site for ATP. Residues 434 to 454 (EAATPRSSKEGERDNHDERKY) form a disordered region. The span at 440 to 454 (SSKEGERDNHDERKY) shows a compositional bias: basic and acidic residues. N-linked (GlcNAc...) asparagine glycosylation is found at Asn-468, Asn-507, and Asn-525. Helical transmembrane passes span 737 to 757 (FLLI…QAWL), 780 to 800 (GFMW…QCWI), 851 to 873 (GVFG…CLII), 877 to 899 (FGWK…SGFW), 964 to 984 (AVIF…ILWY), and 999 to 1019 (FMVS…ILGV). The 288-residue stretch at 738-1025 (LLITIASMGV…ILGVAPSAAQ (288 aa)) folds into the ABC transmembrane type-1 2 domain. The segment at 1038–1057 (DSNRSSQEAEKSGPTVEDTD) is disordered. N-linked (GlcNAc...) asparagine glycans are attached at residues Asn-1040, Asn-1066, and Asn-1075. The 239-residue stretch at 1062–1300 (IELCNVSFKY…RGIYWDMCQT (239 aa)) folds into the ABC transporter 2 domain. 1096-1103 (GPSGCGKT) contributes to the ATP binding site. A glycan (N-linked (GlcNAc...) asparagine) is linked at Asn-1125.

The protein belongs to the ABC transporter superfamily. ABCB family. Multidrug resistance exporter (TC 3.A.1.201) subfamily.

The protein resides in the membrane. ABC transporter; part of the gene cluster that mediates the biosynthesis of the lipopeptides W493 A and B. W493 A and B consist of six amino acid residues D-allo-thr, L-Ala, D-Ala, L-Gln, D-Tyr, and L-Val/L-Ile linked to a 3-hydroxy-4-methyltetradecanoic acid polyketide chain. May be involved in excretion or internal transport of W493 A and B. The protein is ABC transporter FPSE_09185 of Fusarium pseudograminearum (strain CS3096) (Wheat and barley crown-rot fungus).